A 584-amino-acid chain; its full sequence is Protein DENND6A (584 aa).

Residues Met1 to Glu23 form a disordered region. The 180-residue stretch at His39–Lys218 folds into the uDENN domain. The cDENN domain maps to Glu244–Lys369. The 134-residue stretch at Leu371–Asn504 folds into the dDENN domain.

Belongs to the DENND6 family.

The protein resides in the recycling endosome. It is found in the cytoplasm. In terms of biological role, guanine nucleotide exchange factor (GEF) for RAB14. This is Protein DENND6A (DENND6A) from Gallus gallus (Chicken).